The chain runs to 115 residues: U3-lycotoxin-Ls1k (115 aa).

An N-terminal signal peptide occupies residues 1–20 (MKFVLLFGVLVVTLFSYSSA). A propeptide spanning residues 21-44 (EMLDDFDQADEDELLSLIEKEEAR) is cleaved from the precursor. Intrachain disulfides connect Cys48–Cys63, Cys55–Cys72, Cys62–Cys87, and Cys74–Cys85.

Belongs to the neurotoxin 19 (CSTX) family. 01 subfamily. Expressed by the venom gland.

It is found in the secreted. In Lycosa singoriensis (Wolf spider), this protein is U3-lycotoxin-Ls1k.